The primary structure comprises 225 residues: Suppressor of cytokine signaling 3 (225 aa).

Positions 22–33 are kinase inhibitory region (KIR); that stretch reads LKTFSSKSEYQL. An extended SH2 subdomain (ESS) region spans residues 34–45; the sequence is VVNAVRKLQESG. The SH2 domain maps to 46-142; sequence FYWSAVTGGE…APSFPSPPTE (97 aa). The span at 131–142 shows a compositional bias: pro residues; that stretch reads PGAPSFPSPPTE. Residues 131 to 162 form a disordered region; it reads PGAPSFPSPPTEPSSEVPEQPSAQPLPGSPPR. The span at 143–155 shows a compositional bias: low complexity; the sequence is PSSEVPEQPSAQP. The 48-residue stretch at 177 to 224 folds into the SOCS box domain; sequence VLSRPLSSNVATLQHLCRKTVNGHLDSYEKVTQLPGPIREFLDQYDAP.

In terms of assembly, interacts with multiple activated proteins of the tyrosine kinase signaling pathway including IGF1 receptor, insulin receptor and JAK2. Binding to JAK2 is mediated through the KIR and SH2 domains to a phosphorylated tyrosine residue within the JAK2 JH1 domain. Binds specific activated tyrosine residues of the leptin, EPO, IL12, GSCF and gp130 receptors. Interaction with CSNK1E stabilizes SOCS3 protein. Component of the probable ECS(SOCS3) E3 ubiquitin-protein ligase complex which contains CUL5, RNF7/RBX2, Elongin BC complex and SOCS3. Interacts with CUL5, RNF7, ELOB and ELOC. Interacts with CUL2. Interacts with FGFR3. Interacts with INSR. Interacts with BCL10; this interaction may interfere with BCL10-binding with PELI2. Interacts with NOD2 (via CARD domain); the interaction promotes NOD2 degradation. Phosphorylated on tyrosine residues after stimulation by the cytokines, IL-2, EPO or IGF1. As to expression, widely expressed with high expression in heart, placenta, skeletal muscle, peripheral blood leukocytes, fetal and adult lung, and fetal liver and kidney. Lower levels in thymus.

It participates in protein modification; protein ubiquitination. Functionally, SOCS family proteins form part of a classical negative feedback system that regulates cytokine signal transduction. SOCS3 is involved in negative regulation of cytokines that signal through the JAK/STAT pathway. Inhibits cytokine signal transduction by binding to tyrosine kinase receptors including IL6ST/gp130, LIF, erythropoietin, insulin, IL12, GCSF and leptin receptors. Binding to JAK2 inhibits its kinase activity and regulates IL6 signaling. Suppresses fetal liver erythropoiesis. Regulates onset and maintenance of allergic responses mediated by T-helper type 2 cells. Probable substrate recognition component of a SCF-like ECS (Elongin BC-CUL2/5-SOCS-box protein) E3 ubiquitin-protein ligase complex which mediates the ubiquitination and subsequent proteasomal degradation of target proteins. The chain is Suppressor of cytokine signaling 3 from Homo sapiens (Human).